Reading from the N-terminus, the 265-residue chain is Gamma-secretase subunit APH-1A (265 aa).

Residues 1–2 (MG) lie on the Lumenal side of the membrane. Residues 3-23 (AAVFFGCTFVAFGPAFSLFLI) traverse the membrane as a helical segment. Over 24-31 (TVAGDPLR) the chain is Cytoplasmic. The chain crosses the membrane as a helical span at residues 32-52 (VIILVAGAFFWLVSLLLASVV). At 53-68 (WFILVHVTDRSDARLQ) the chain is on the lumenal side. A helical membrane pass occupies residues 69-89 (YGLLIFGAAVSVLLQEVFRFA). The Cytoplasmic portion of the chain corresponds to 90-118 (YYKLLKKADEGLASLSEDGRSPISIRQMA). Residues 119–139 (YVSGLSFGIISGVFSVINILA) traverse the membrane as a helical segment. Residues 140 to 158 (DALGPGVVGIHGDSPYYFL) lie on the Lumenal side of the membrane. The chain crosses the membrane as a helical span at residues 159 to 179 (TSAFLTAAIILLHTFWGVVFF). At 180 to 186 (DACERRR) the chain is on the cytoplasmic side. A helical transmembrane segment spans residues 187 to 207 (YWALGLVVGSHLLTSGLTFLN). Over 208 to 213 (PWYEAS) the chain is Lumenal. The helical transmembrane segment at 214–234 (LLPIYAVTVSMGLWAFITAGG) threads the bilayer. Over 235–265 (SLRSIQRSLSCRRQEDSRVMVYSALRIPPED) the chain is Cytoplasmic.

Belongs to the APH-1 family. As to quaternary structure, the functional gamma-secretase complex is composed of at least four polypeptides: a presenilin homodimer (PSEN1 or PSEN2), nicastrin (NCSTN), APH1 (APH1A or APH1B) and PSENEN/PEN2.

Its subcellular location is the endoplasmic reticulum membrane. The protein localises to the golgi apparatus. It localises to the golgi stack membrane. In terms of biological role, non-catalytic subunit of the gamma-secretase complex, an endoprotease complex that catalyzes the intramembrane cleavage of integral membrane proteins such as Notch receptors and APP (amyloid-beta precursor protein). Required for normal gamma-secretase assembly. The gamma-secretase complex plays a role in Notch and Wnt signaling cascades and regulation of downstream processes via its role in processing key regulatory proteins, and by regulating cytosolic CTNNB1 levels. This chain is Gamma-secretase subunit APH-1A (Aph1a), found in Mus musculus (Mouse).